Here is a 691-residue protein sequence, read N- to C-terminus: Protein vreteno (691 aa).

The disordered stretch occupies residues 128-155; it reads QKEREITSDPVTSTEPMPTPGPAISATE. Tudor domains lie at 366-427 and 573-630; these read KLQS…LAGL and APPI…FIFP.

Interacts with aub and piwi. As to expression, gonad-specific.

The protein localises to the cytoplasm. The protein resides in the cytoplasmic ribonucleoprotein granule. Gonad-specific protein essential for germline development to repress transposable elements and preventing their mobilization, which is essential for the germline integrity. Acts via the piRNA metabolic process in both germline and somatic gonadal tissues by mediating the repression of transposable elements during meiosis. Required for primary piRNA biogenesis in both germline and somatic gonadal tissues. The sequence is that of Protein vreteno (vret) from Drosophila melanogaster (Fruit fly).